A 642-amino-acid chain; its full sequence is Putative ATP-binding protein YdiF (642 aa).

2 consecutive ABC transporter domains span residues 4–259 (LQVN…EKDL) and 327–541 (LRVQ…ELEK). ATP is bound by residues 36-43 (GRNGAGKS) and 360-367 (GPNGIGKS). Basic and acidic residues-rich tracts occupy residues 541–550 (KMNQQEETDK) and 557–567 (SDSKRSYEEEK). Residues 541–567 (KMNQQEETDKTPATVKSDSKRSYEEEK) form a disordered region.

Belongs to the ABC transporter superfamily. ABCF family. YdiF subfamily.

The protein is Putative ATP-binding protein YdiF (ydiF) of Bacillus subtilis (strain 168).